A 102-amino-acid polypeptide reads, in one-letter code: Trp operon repressor homolog (102 aa).

Residues 59 to 82 (QRQISQMLGVGIATITRGSNELKL) mediate DNA binding.

Belongs to the TrpR family. As to quaternary structure, homodimer.

The protein localises to the cytoplasm. Its function is as follows. This protein is an aporepressor. When complexed with L-tryptophan it binds the operator region of the trp operon and prevents the initiation of transcription. The sequence is that of Trp operon repressor homolog from Vibrio vulnificus (strain CMCP6).